Consider the following 964-residue polypeptide: Integrator complex subunit 4 (964 aa).

Lysine 27 is subject to N6-acetyllysine. HEAT repeat units lie at residues 67–106, 146–184, 191–229, 230–264, 278–314, 370–406, 407–445, and 447–485; these read AESV…TAGF, QATQ…LEKS, GSAA…RGLK, LHQT…SQLY, IRLV…EQVS, NLIE…AQSS, PSFA…NITL, and EDQL…GIHL. Residue lysine 792 forms a Glycyl lysine isopeptide (Lys-Gly) (interchain with G-Cter in SUMO1); alternate linkage. Lysine 792 is covalently cross-linked (Glycyl lysine isopeptide (Lys-Gly) (interchain with G-Cter in SUMO2); alternate).

It belongs to the Integrator subunit 4 family. Component of the Integrator complex, composed of core subunits INTS1, INTS2, INTS3, INTS4, INTS5, INTS6, INTS7, INTS8, INTS9/RC74, INTS10, INTS11/CPSF3L, INTS12, INTS13, INTS14 and INTS15. The core complex associates with protein phosphatase 2A subunits PPP2CA and PPP2R1A, to form the Integrator-PP2A (INTAC) complex. INTS4 is part of the RNA endonuclease subcomplex, composed of INTS4, INTS9, INTS11 and inositol hexakisphosphate (InsP6). Interacts with BRAT1; interaction is required for the assembly of the RNA endonuclease subcomplex.

The protein localises to the nucleus. The protein resides in the cytoplasm. In terms of biological role, component of the integrator complex, a multiprotein complex that terminates RNA polymerase II (Pol II) transcription in the promoter-proximal region of genes. The integrator complex provides a quality checkpoint during transcription elongation by driving premature transcription termination of transcripts that are unfavorably configured for transcriptional elongation: the complex terminates transcription by (1) catalyzing dephosphorylation of the C-terminal domain (CTD) of Pol II subunit POLR2A/RPB1 and SUPT5H/SPT5, (2) degrading the exiting nascent RNA transcript via endonuclease activity and (3) promoting the release of Pol II from bound DNA. The integrator complex is also involved in terminating the synthesis of non-coding Pol II transcripts, such as enhancer RNAs (eRNAs), small nuclear RNAs (snRNAs), telomerase RNAs and long non-coding RNAs (lncRNAs). Within the integrator complex, INTS4 acts as an scaffold that links INTS9 and INTS11. Mediates recruitment of cytoplasmic dynein to the nuclear envelope, probably as component of the integrator complex. The chain is Integrator complex subunit 4 (Ints4) from Mus musculus (Mouse).